The sequence spans 1600 residues: MKKGGFGSGGFGAFSSSTASLSYVAPPPDLSSVPQDVIVPFKNLLKRDSTTKSKALEEILACVKKSDQPVDDSVIDVWAQLYPRVAIDNNRRVRELSHNLLLELVKSAKKRIEKTLPKLVGPWVAGTFDKDKGVARAALAVSAHILDSDQKKAKFWIAFQGKLLEYSNEAIRETADSLSDERTTSKEDMEAKYYRVLGSSMAMIQHLLPTVKDDQYPDELKRFFDADTLWTLAASDDASVRRAFYQLVASYLDNKPSLLEPKLKDVGKVLVAEGPKKEQRGSAVDLLRALISVTKRFPKVWGSKSPLDRLRPLVQKGSQGGSDEFWTELDQLLAILPTSSPDYAANAPAFLKSMRTAITSREERRQNAASAWACYLNTVDRITAGSTPSPDFLQENLYPLTREYLHPSTETSTWAYAQPPHVFKAWKIVPYTTNEQVRSSAKEEWQKLGDDFAAGLSNSLPEVSPDYEKSQLELAAQGDRWFTLVQGFLRGAPSQQSFDGDADLPSVVASTSRKLLESAQDLLARRNYKPFCAAAVLKAAFTKAPVLCAKSDLIKKVFPLDDQEAFEKIVVSRSLPFLASCLGAVTPDQPDFSEQVWVKLIDAALSHGFPSGAPIVKELVSVPLPQTVAQKSEALQNFIVEAWQDFFKEEPSSPVVEQLCRASISHSVVDDKTLQSLASSFAQDIGVAGKYDPEFKALDLLLRNKSALFADAPVDLFTRLLSLEEISDSEKATKVAAIRSLIQKQYGGNKLWLEVIRLSLAEADPSSLDINTLIRHAKEILSSGVPLTDLLPSAKAWNTELYSFLRDNPDPSLSITSSFGGAYFLATESEGSTLTTQKRDRQGRSIPARMAIYTTNLFTDVDLESVQADLLELIFLTAVLANDDLTVMKENGLWSLPASEDIRTERSDEIQSFLDLGTSLLARVAGASASWKEGDLDGTSLAEMLIQSLLQQAVDFSAKALYASKALTELFQALVSVHGYPAGAKFDEWFNKLGIMKATPQTVFAAIAFLTGFDEGLASSRAVANLYNRLVSDIVGCFPSSPKTLYNVVLLNICLSVYPPAKTPVEQRKLVFALKQFTTWVQTPDEMTFGLTAEVCKGIHRILPNVAQVYGPYWREAIDYCLLLWEKARNDTPQRWPAYVLPSIRLISSMETLEDPNDDLVEALEETAVDRSKALIRLLELPHDVVNTARQILDETLCRAVQKIPLKHLTSEKDLLTNLYGLLSSGSREVQTAAFGLLHRALPAQQEEEVLETLLEEKVAKVPDELLSIIQAVPELEKYTDEELAGFPVDVRSYLLGWHLVFDAYNQAPLQVRKQYTDSLKADNSLNALLELMFDVLGHSTGQALNLDKNTFSAEHIRSYDVSQSEEGTKERDMQWLLVHLFYLSLKFLPGLVKSWYLDLRSKQTKIALDSWMAKYYAPLLISDALDEVNDWASSQEAPQEDEKELRVRVNRTAKEVSAGYEIDEDFASIAIKIPAGYPLESVEVIGENRVAVNEKKWQSWVRATQGVITFANGSITDGLAAFRRNIIGALKGHTECPICYAVVSADKKLPDKRCSTCNNLFHRLCLYKWFQNSNKNTCPLCRNPIDYLGSSTRRGGGGD.

11 HEAT repeats span residues 31–65, 114–150, 161–202, 245–288, 291–344, 526–606, 853–904, 962–986, 1045–1083, 1289–1324, and 1325–1369; these read SSVPQDVIVPFKNLLKRDSTTKSKALEEILACVKK, KTLPKLVGPWVAGTFDKDKGVARAALAVSAHILDSDQ, GKLL…SSMA, YQLV…DLLR, ISVT…PDYA, RNYK…AALS, YTTN…DIRT, YASKALTELFQALVSVHGYPAGAKF, LYNVVLLNICLSVYPPAKTPVEQRKLVFALKQFTTWVQT, VDVRSYLLGWHLVFDAYNQAPLQVRKQYTDSLKADN, and SLNA…EEGT. An RING-type; degenerate zinc finger spans residues 1537–1583; the sequence is CPICYAVVSADKKLPDKRCSTCNNLFHRLCLYKWFQNSNKNTCPLCR.

Belongs to the LTN1 family. In terms of assembly, component of the ribosome quality control complex (RQC), composed of the E3 ubiquitin ligase RKR1/LTN1, RQC1 and RQC2, as well as CDC48 and its ubiquitin-binding cofactors associated with the 60S ribosomal subunits.

Its subcellular location is the nucleus. The protein resides in the cytoplasm. It localises to the cytosol. It carries out the reaction S-ubiquitinyl-[E2 ubiquitin-conjugating enzyme]-L-cysteine + [acceptor protein]-L-lysine = [E2 ubiquitin-conjugating enzyme]-L-cysteine + N(6)-ubiquitinyl-[acceptor protein]-L-lysine.. It participates in protein modification; protein ubiquitination. Its function is as follows. E3 ubiquitin-protein ligase component of the ribosome quality control complex (RQC), a ribosome-associated complex that mediates ubiquitination and extraction of incompletely synthesized nascent chains for proteasomal degradation. Mediates ubiquitination of proteins derived from mRNAs lacking stop codons (non-stop proteins) and other translation arrest products induced by poly-lysine sequences and tandem rare codons. Ubiquitination leads to CDC48 recruitment for extraction and degradation of the incomplete translation product. May indirectly play a role in chromatin function and transcription. The polypeptide is E3 ubiquitin-protein ligase listerin (rkr-1) (Neurospora crassa (strain ATCC 24698 / 74-OR23-1A / CBS 708.71 / DSM 1257 / FGSC 987)).